Reading from the N-terminus, the 658-residue chain is Exoribonuclease 2 (658 aa).

An RNB domain is found at 189-530; that stretch reads REDLTSLYFT…VNHRLIKQVL (342 aa). The S1 motif domain occupies 576–658; the sequence is AVEFDCEIAD…ETRSIVGNII (83 aa).

The protein belongs to the RNR ribonuclease family. RNase II subfamily.

The protein localises to the cytoplasm. The enzyme catalyses Exonucleolytic cleavage in the 3'- to 5'-direction to yield nucleoside 5'-phosphates.. Functionally, involved in mRNA degradation. Hydrolyzes single-stranded polyribonucleotides processively in the 3' to 5' direction. The chain is Exoribonuclease 2 from Actinobacillus pleuropneumoniae serotype 3 (strain JL03).